The following is a 203-amino-acid chain: Large ribosomal subunit protein uL13 (203 aa).

At A2 the chain carries N-acetylalanine. R59 is subject to Citrulline. S77 carries the phosphoserine modification. R140 bears the Citrulline mark. Residue K191 is modified to N6-acetyllysine.

Belongs to the universal ribosomal protein uL13 family. Component of the 60S ribosome. Component of the GAIT complex. Interacts with EIF4G1. Phosphorylation at Ser-77 upon interferon-gamma treatment in macrophages involves a DAPK1-DAPK3 kinase cascade and is causing release from the ribosome, association with the GAIT complex and subsequent involvement in transcript-selective translation inhibition. Post-translationally, citrullinated by PADI4.

The protein localises to the cytoplasm. Its function is as follows. Associated with ribosomes but is not required for canonical ribosome function and has extra-ribosomal functions. Component of the GAIT (gamma interferon-activated inhibitor of translation) complex which mediates interferon-gamma-induced transcript-selective translation inhibition in inflammation processes. Upon interferon-gamma activation and subsequent phosphorylation dissociates from the ribosome and assembles into the GAIT complex which binds to stem loop-containing GAIT elements in the 3'-UTR of diverse inflammatory mRNAs (such as ceruplasmin) and suppresses their translation. In the GAIT complex interacts with m7G cap-bound eIF4G at or near the eIF3-binding site and blocks the recruitment of the 43S ribosomal complex. Involved in methylation of rRNA. The sequence is that of Large ribosomal subunit protein uL13 (RPL13A) from Bos taurus (Bovine).